A 162-amino-acid polypeptide reads, in one-letter code: Probable E3 ubiquitin-protein ligase XERICO (162 aa).

Residues 12–28 (GMLCVILVNTALSISIV) traverse the membrane as a helical segment. The segment at 103–145 (CSVCLSKFQGDSEINKLKCGHLFHKTCLEKWIDYWNITCPLCR) adopts an RING-type; atypical zinc-finger fold.

Interacts with UBC8 and TULP9. Ubiquitous. Higher expression in actively growing tissues.

It localises to the membrane. The catalysed reaction is S-ubiquitinyl-[E2 ubiquitin-conjugating enzyme]-L-cysteine + [acceptor protein]-L-lysine = [E2 ubiquitin-conjugating enzyme]-L-cysteine + N(6)-ubiquitinyl-[acceptor protein]-L-lysine.. The protein operates within protein modification; protein ubiquitination. In terms of biological role, function on abscisic acid homeostasis at post-translational level, probably through ubiquitin/proteasome-dependent substrate-specific degradation. The protein is Probable E3 ubiquitin-protein ligase XERICO (XERICO) of Arabidopsis thaliana (Mouse-ear cress).